A 166-amino-acid chain; its full sequence is Small ribosomal subunit protein uS5 (166 aa).

Positions 12-75 (YIEKLVQVNR…EAARRNMIQV (64 aa)) constitute an S5 DRBM domain.

The protein belongs to the universal ribosomal protein uS5 family. Part of the 30S ribosomal subunit. Contacts proteins S4 and S8.

Its function is as follows. With S4 and S12 plays an important role in translational accuracy. In terms of biological role, located at the back of the 30S subunit body where it stabilizes the conformation of the head with respect to the body. This chain is Small ribosomal subunit protein uS5, found in Pseudomonas savastanoi pv. phaseolicola (strain 1448A / Race 6) (Pseudomonas syringae pv. phaseolicola (strain 1448A / Race 6)).